We begin with the raw amino-acid sequence, 357 residues long: Type II methyltransferase M1.HgaI (357 aa).

The SAM-dependent MTase C5-type domain maps to 5 to 357 (IMGLSLFSSA…NITREIFNEN (353 aa)). Residue cysteine 83 is part of the active site.

It belongs to the class I-like SAM-binding methyltransferase superfamily. C5-methyltransferase family.

The enzyme catalyses a 2'-deoxycytidine in DNA + S-adenosyl-L-methionine = a 5-methyl-2'-deoxycytidine in DNA + S-adenosyl-L-homocysteine + H(+). Functionally, a methylase that recognizes DNA with the sequence 5'-GCGTC-3', methylates C-2, and protects the DNA from cleavage by the HgaI endonuclease. The polypeptide is Type II methyltransferase M1.HgaI (hgaIAM) (Avibacterium volantium (Pasteurella volantium)).